The chain runs to 171 residues: Putative pre-16S rRNA nuclease (171 aa).

This sequence belongs to the YqgF nuclease family.

It localises to the cytoplasm. In terms of biological role, could be a nuclease involved in processing of the 5'-end of pre-16S rRNA. The chain is Putative pre-16S rRNA nuclease from Corynebacterium diphtheriae (strain ATCC 700971 / NCTC 13129 / Biotype gravis).